The primary structure comprises 137 residues: Large ribosomal subunit protein uL16 (137 aa).

The protein belongs to the universal ribosomal protein uL16 family. In terms of assembly, part of the 50S ribosomal subunit.

Functionally, binds 23S rRNA and is also seen to make contacts with the A and possibly P site tRNAs. In Rhodopseudomonas palustris (strain BisB5), this protein is Large ribosomal subunit protein uL16.